The following is a 240-amino-acid chain: Aquaporin Z (240 aa).

2 helical membrane passes run 10–30 (MIGT…AAGF) and 35–55 (IGLV…AYAI). Positions 64-66 (NPA) match the NPA 1 motif. The next 3 membrane-spanning stretches (helical) occupy residues 90-110 (VLGA…AAGF), 131-151 (LVAC…VIMG), and 160-180 (GFAP…SIPV). The NPA 2 signature appears at 186-188 (NPA). Residues 202-222 (IGQLWLFWVAPLLGGVLGGVI) form a helical membrane-spanning segment.

The protein belongs to the MIP/aquaporin (TC 1.A.8) family. Homotetramer.

The protein resides in the cell inner membrane. The catalysed reaction is H2O(in) = H2O(out). Channel that permits osmotically driven movement of water in both directions. It is involved in the osmoregulation and in the maintenance of cell turgor during volume expansion in rapidly growing cells. It mediates rapid entry or exit of water in response to abrupt changes in osmolarity. This Rhodopseudomonas palustris (strain ATCC BAA-98 / CGA009) protein is Aquaporin Z.